Reading from the N-terminus, the 212-residue chain is Uracil phosphoribosyltransferase (212 aa).

5-phospho-alpha-D-ribose 1-diphosphate contacts are provided by residues Arg-78, Arg-103, and 130–138 (DPMLATGSS). Uracil-binding positions include Ile-193 and 198–200 (GDA). A 5-phospho-alpha-D-ribose 1-diphosphate-binding site is contributed by Asp-199.

Belongs to the UPRTase family. It depends on Mg(2+) as a cofactor.

The enzyme catalyses UMP + diphosphate = 5-phospho-alpha-D-ribose 1-diphosphate + uracil. It participates in pyrimidine metabolism; UMP biosynthesis via salvage pathway; UMP from uracil: step 1/1. Allosterically activated by GTP. Catalyzes the conversion of uracil and 5-phospho-alpha-D-ribose 1-diphosphate (PRPP) to UMP and diphosphate. This chain is Uracil phosphoribosyltransferase, found in Pseudomonas fluorescens (strain ATCC BAA-477 / NRRL B-23932 / Pf-5).